Consider the following 208-residue polypeptide: MSSQIKLTKNAYRLEKIKLARLETYLPTLKLKMALLQVEVANAVRESSASIQAYEEARESIYAFAELFSIPLYVDAIANSFKIEKVEKGYENITGVEVPVVKNIVLSESSYSVLDTPIWIDTLVAYSREFVINKVRSEVAREKQRILEEELRNVSIRVNLFEKKLIPETTRMIKKIAIFLSDRSITDVGQVKMAKKKIQQRKEESECA.

This sequence belongs to the V-ATPase D subunit family.

Functionally, produces ATP from ADP in the presence of a proton gradient across the membrane. This is V-type ATP synthase subunit D from Chlamydia felis (strain Fe/C-56) (Chlamydophila felis).